Consider the following 646-residue polypeptide: Long-chain fatty acid transport protein 1 (646 aa).

Residues 1–13 (MRAPGAGSASVAS) lie on the Extracellular side of the membrane. The helical transmembrane segment at 14–34 (LVLLWLLGLPWTWSTAAALGV) threads the bilayer. Residues 35–646 (YVGGGGWRFL…TRICSGAFAL (612 aa)) are Cytoplasmic-facing. Residues 191–475 (EMSGELGKSL…YISESATSKK (285 aa)) are sufficient for oligomerization. 246 to 257 (YIYTSGTTGLPK) lines the AMP pocket.

This sequence belongs to the ATP-dependent AMP-binding enzyme family. As to quaternary structure, self-associates. May function as a homodimer. Interacts with EPRS1; mediates the translocation of SLC27A1 from the cytoplasm to the plasma membrane thereby increasing the uptake of long-chain fatty acids. Interacts with DGAT2 and this interaction is enhanced in the presence of ZFYVE1.

Its subcellular location is the cell membrane. It is found in the endomembrane system. It localises to the cytoplasm. The enzyme catalyses a fatty acid(in) = a fatty acid(out). It carries out the reaction (9Z)-octadecenoate(out) = (9Z)-octadecenoate(in). It catalyses the reaction hexadecanoate(out) = hexadecanoate(in). The catalysed reaction is (5Z,8Z,11Z,14Z)-eicosatetraenoate(out) = (5Z,8Z,11Z,14Z)-eicosatetraenoate(in). The enzyme catalyses (9Z,12Z)-octadecadienoate(out) = (9Z,12Z)-octadecadienoate(in). It carries out the reaction a long-chain fatty acid + ATP + CoA = a long-chain fatty acyl-CoA + AMP + diphosphate. It catalyses the reaction (5Z,8Z,11Z,14Z)-eicosatetraenoate + ATP + CoA = (5Z,8Z,11Z,14Z)-eicosatetraenoyl-CoA + AMP + diphosphate. The catalysed reaction is a very long-chain fatty acid + ATP + CoA = a very long-chain fatty acyl-CoA + AMP + diphosphate. The enzyme catalyses tetracosanoate + ATP + CoA = tetracosanoyl-CoA + AMP + diphosphate. With respect to regulation, inhibited by Triacsin C. Functionally, mediates the import of long-chain fatty acids (LCFA) into the cell by facilitating their transport at the plasma membrane. Also functions as an acyl-CoA ligase catalyzing the ATP-dependent formation of fatty acyl-CoA using LCFA and very-long-chain fatty acids (VLCFA) as substrates, which prevents fatty acid efflux from cells and might drive more fatty acid uptake. May act directly as a bona fide transporter, or alternatively, in a cytoplasmic or membrane-associated multimeric protein complex to trap and draw fatty acids towards accumulation. Plays a pivotal role in regulating available LCFA substrates from exogenous sources in tissues undergoing high levels of beta-oxidation or triglyceride synthesis. May be involved in regulation of cholesterol metabolism. Probably involved in fatty acid transport across the blood barrier. This is Long-chain fatty acid transport protein 1 from Bos taurus (Bovine).